Consider the following 429-residue polypeptide: Enolase (429 aa).

Residue glutamine 163 participates in (2R)-2-phosphoglycerate binding. Glutamate 205 functions as the Proton donor in the catalytic mechanism. 3 residues coordinate Mg(2+): aspartate 242, glutamate 287, and aspartate 314. Residues lysine 339, arginine 368, serine 369, and lysine 390 each contribute to the (2R)-2-phosphoglycerate site. The active-site Proton acceptor is lysine 339.

The protein belongs to the enolase family. Mg(2+) serves as cofactor.

It is found in the cytoplasm. Its subcellular location is the secreted. The protein localises to the cell surface. It catalyses the reaction (2R)-2-phosphoglycerate = phosphoenolpyruvate + H2O. The protein operates within carbohydrate degradation; glycolysis; pyruvate from D-glyceraldehyde 3-phosphate: step 4/5. In terms of biological role, catalyzes the reversible conversion of 2-phosphoglycerate (2-PG) into phosphoenolpyruvate (PEP). It is essential for the degradation of carbohydrates via glycolysis. This is Enolase from Anaeromyxobacter sp. (strain Fw109-5).